The sequence spans 202 residues: MEVEASYSYGFLPSGRHQPYAPPPPHPAEEGELWEYFPCPFCYIEVEVPFICNHLQEEHCFDTRNAVCPLCADNIGRDMGAHFRVQHSHLLKRRKPSRPSSSWPTPSNNSDPYFEGPPQYMMNNRTYQDPAPDPLLSQFICSMAQTDTNSDNTNTEIAVSAVSHDQRLSQRVTLTDDASKLELKERLQRIEFVKEIIMSTIL.

Over residues 88-97 (SHLLKRRKPS) the composition is skewed to basic residues. Positions 88 to 120 (SHLLKRRKPSRPSSSWPTPSNNSDPYFEGPPQY) are disordered. Over residues 98 to 112 (RPSSSWPTPSNNSDP) the composition is skewed to low complexity.

The protein belongs to the Di19 family.

The sequence is that of Protein DEHYDRATION-INDUCED 19 homolog 5 (DI19-5) from Oryza sativa subsp. japonica (Rice).